The chain runs to 280 residues: 3-deoxy-manno-octulosonate cytidylyltransferase (280 aa).

The protein belongs to the KdsB family.

Its subcellular location is the cytoplasm. The enzyme catalyses 3-deoxy-alpha-D-manno-oct-2-ulosonate + CTP = CMP-3-deoxy-beta-D-manno-octulosonate + diphosphate. The protein operates within nucleotide-sugar biosynthesis; CMP-3-deoxy-D-manno-octulosonate biosynthesis; CMP-3-deoxy-D-manno-octulosonate from 3-deoxy-D-manno-octulosonate and CTP: step 1/1. It functions in the pathway bacterial outer membrane biogenesis; lipopolysaccharide biosynthesis. Functionally, activates KDO (a required 8-carbon sugar) for incorporation into bacterial lipopolysaccharide in Gram-negative bacteria. The chain is 3-deoxy-manno-octulosonate cytidylyltransferase from Colwellia psychrerythraea (strain 34H / ATCC BAA-681) (Vibrio psychroerythus).